The chain runs to 37 residues: uncharacterized protein (37 aa).

The helical transmembrane segment at 16–36 (FALIVVLFILLIIVGTAFVGG) threads the bilayer.

It belongs to the SscA family.

The protein resides in the membrane. This is an uncharacterized protein from Bacillus subtilis (strain 168).